Consider the following 488-residue polypeptide: Ribulose bisphosphate carboxylase large chain (488 aa).

Substrate is bound by residues Asn127 and Thr177. Residue Lys179 is the Proton acceptor of the active site. Lys181 provides a ligand contact to substrate. Mg(2+) contacts are provided by Lys205, Asp207, and Glu208. N6-carboxylysine is present on Lys205. His297 serves as the catalytic Proton acceptor. Positions 298, 330, and 382 each coordinate substrate.

Belongs to the RuBisCO large chain family. Type I subfamily. In terms of assembly, heterohexadecamer of 8 large chains and 8 small chains. The cofactor is Mg(2+).

It localises to the plastid. The protein localises to the chloroplast. It catalyses the reaction 2 (2R)-3-phosphoglycerate + 2 H(+) = D-ribulose 1,5-bisphosphate + CO2 + H2O. The catalysed reaction is D-ribulose 1,5-bisphosphate + O2 = 2-phosphoglycolate + (2R)-3-phosphoglycerate + 2 H(+). In terms of biological role, ruBisCO catalyzes two reactions: the carboxylation of D-ribulose 1,5-bisphosphate, the primary event in carbon dioxide fixation, as well as the oxidative fragmentation of the pentose substrate in the photorespiration process. Both reactions occur simultaneously and in competition at the same active site. The polypeptide is Ribulose bisphosphate carboxylase large chain (Cyanidium caldarium (Red alga)).